A 193-amino-acid chain; its full sequence is NADH-quinone oxidoreductase subunit B (193 aa).

Residues M1–V11 are compositionally biased toward polar residues. A disordered region spans residues M1 to T23. The [4Fe-4S] cluster site is built by C72, C73, C137, and C167.

The protein belongs to the complex I 20 kDa subunit family. In terms of assembly, NDH-1 is composed of 14 different subunits. Subunits NuoB, C, D, E, F, and G constitute the peripheral sector of the complex. [4Fe-4S] cluster is required as a cofactor.

It localises to the cell inner membrane. The catalysed reaction is a quinone + NADH + 5 H(+)(in) = a quinol + NAD(+) + 4 H(+)(out). In terms of biological role, NDH-1 shuttles electrons from NADH, via FMN and iron-sulfur (Fe-S) centers, to quinones in the respiratory chain. Couples the redox reaction to proton translocation (for every two electrons transferred, four hydrogen ions are translocated across the cytoplasmic membrane), and thus conserves the redox energy in a proton gradient. The sequence is that of NADH-quinone oxidoreductase subunit B from Brucella canis (strain ATCC 23365 / NCTC 10854 / RM-666).